The primary structure comprises 396 residues: Ornithine aminotransferase (396 aa).

An N6-(pyridoxal phosphate)lysine modification is found at lysine 255.

The protein belongs to the class-III pyridoxal-phosphate-dependent aminotransferase family. OAT subfamily. Pyridoxal 5'-phosphate serves as cofactor.

The protein resides in the cytoplasm. It catalyses the reaction a 2-oxocarboxylate + L-ornithine = L-glutamate 5-semialdehyde + an L-alpha-amino acid. It participates in amino-acid biosynthesis; L-proline biosynthesis; L-glutamate 5-semialdehyde from L-ornithine: step 1/1. Functionally, catalyzes the interconversion of ornithine to glutamate semialdehyde. The protein is Ornithine aminotransferase of Bacillus anthracis (strain A0248).